Here is a 154-residue protein sequence, read N- to C-terminus: Bacterial ferritin (154 aa).

The 145-residue stretch at 1–145 (MQGNQAVVDY…QQLRLIELIG (145 aa)) folds into the Ferritin-like diiron domain. Fe cation is bound by residues Glu18, Glu51, His54, Glu93, Glu127, and His130.

It belongs to the bacterioferritin family. As to quaternary structure, forms a bacterioferritin (BFR) complex with BfrB. Heterooligomer of 24 subunits, arranged as 12 dimers, that are packed together to form an approximately spherical molecule with a central cavity, in which large amounts of iron can be deposited.

The protein resides in the cytoplasm. It catalyses the reaction 4 Fe(2+) + O2 + 4 H(+) = 4 Fe(3+) + 2 H2O. The catalysed reaction is Fe(2+)(in) = Fe(2+)(out). Its function is as follows. Iron-storage protein. Its ferroxidase center binds Fe(2+), oxidizes it using dioxygen to Fe(3+), and participates in the subsequent Fe(3+) oxide mineral core formation within the central cavity of the BFR protein shell. Plays a role in protection against iron-mediated oxidative stress. The sequence is that of Bacterial ferritin from Neisseria gonorrhoeae.